The primary structure comprises 1056 residues: Carbamoyl phosphate synthase large chain (1056 aa).

Residues Met1–Glu401 form a carboxyphosphate synthetic domain region. Residues Arg129, Arg169, Gly175, Gly176, Lys208, Ile210, Glu215, Gly241, Ile242, His243, Gln284, and Glu298 each coordinate ATP. An ATP-grasp 1 domain is found at Lys133 to Val327. Residues Gln284, Glu298, and Asn300 each contribute to the Mg(2+) site. The Mn(2+) site is built by Gln284, Glu298, and Asn300. Positions Ile402 to Ser546 are oligomerization domain. The interval Gln547 to His929 is carbamoyl phosphate synthetic domain. Residues Asp671–Leu861 form the ATP-grasp 2 domain. ATP is bound by residues Arg707, Ala746, Leu748, Glu752, Gly777, Val778, His779, Ser780, Gln820, and Glu832. Positions 820, 832, and 834 each coordinate Mg(2+). 3 residues coordinate Mn(2+): Gln820, Glu832, and Asn834. The MGS-like domain occupies Ile930–Lys1056. Residues Ile930 to Lys1056 are allosteric domain.

This sequence belongs to the CarB family. Composed of two chains; the small (or glutamine) chain promotes the hydrolysis of glutamine to ammonia, which is used by the large (or ammonia) chain to synthesize carbamoyl phosphate. Tetramer of heterodimers (alpha,beta)4. Requires Mg(2+) as cofactor. It depends on Mn(2+) as a cofactor.

The catalysed reaction is hydrogencarbonate + L-glutamine + 2 ATP + H2O = carbamoyl phosphate + L-glutamate + 2 ADP + phosphate + 2 H(+). The enzyme catalyses hydrogencarbonate + NH4(+) + 2 ATP = carbamoyl phosphate + 2 ADP + phosphate + 2 H(+). The protein operates within amino-acid biosynthesis; L-arginine biosynthesis; carbamoyl phosphate from bicarbonate: step 1/1. It participates in pyrimidine metabolism; UMP biosynthesis via de novo pathway; (S)-dihydroorotate from bicarbonate: step 1/3. In terms of biological role, large subunit of the glutamine-dependent carbamoyl phosphate synthetase (CPSase). CPSase catalyzes the formation of carbamoyl phosphate from the ammonia moiety of glutamine, carbonate, and phosphate donated by ATP, constituting the first step of 2 biosynthetic pathways, one leading to arginine and/or urea and the other to pyrimidine nucleotides. The large subunit (synthetase) binds the substrates ammonia (free or transferred from glutamine from the small subunit), hydrogencarbonate and ATP and carries out an ATP-coupled ligase reaction, activating hydrogencarbonate by forming carboxy phosphate which reacts with ammonia to form carbamoyl phosphate. This chain is Carbamoyl phosphate synthase large chain, found in Limosilactobacillus reuteri (strain DSM 20016) (Lactobacillus reuteri).